The following is a 728-amino-acid chain: Dynamin-like protein 1 (728 aa).

An assembly domain, required for tetramerization region spans residues 1 to 119 (MKELFQKIWQ…ILQEKVQSID (119 aa)). The 284-residue stretch at 159–442 (QNLEFNIAIT…LYAGEKSKIA (284 aa)) folds into the Dynamin-type G domain. Residues 169 to 176 (GVMNAGKS) are G1 motif. 171 to 177 (MNAGKSS) contacts GDP. The interval 195-196 (ET) is G2 motif. The segment at 298-301 (DTPG) is G3 motif. The G4 motif stretch occupies residues 358–361 (TKAD). Lys359 lines the GDP pocket. A region of interest (G5 motif) is located at residue Glu388. 400–402 (SAK) contributes to the GDP binding site. The required for liposome binding but not for tetramerization stretch occupies residues 470–695 (ENKQGVSEEN…LESLEKVLQS (226 aa)).

The protein belongs to the TRAFAC class dynamin-like GTPase superfamily. Dynamin/Fzo/YdjA family. In terms of assembly, forms a 2:2 heterotetramer with DLP1. DLP2 forms a central back-to-back dimer flanked on each side by a DLP1 subunit. In the crystal structures the 2 DLP1 subunits are in very different conformations.

Its subcellular location is the cytoplasm. The protein localises to the cytosol. It carries out the reaction GTP + H2O = GDP + phosphate + H(+). Its function is as follows. The heterotetrameric DLP1(2)-DLP2(2) complex tethers liposomes and may mediate their fusion. Initial binding is probably mediated by DLP1, while DLP2 couples DLP1 subunits and increases the effective reach of the complex up to 45 nm. The role of the nucleotide is unknown. This subunit alone weakly binds to liposomes; GTP, GDP, GMPPCP and GMPPNP do not change heterotetramer binding. Tetramerization is required for GTPase activity, suggesting the GTPase domains (dynamin-type G) from DLP1 and DLP2 must dimerize to reconstitute the GTPase active site. This chain is Dynamin-like protein 1, found in Campylobacter jejuni subsp. jejuni serotype O:23/36 (strain 81-176).